A 304-amino-acid polypeptide reads, in one-letter code: UDP-3-O-acyl-N-acetylglucosamine deacetylase (304 aa).

His78, His237, and Asp241 together coordinate Zn(2+). His264 functions as the Proton donor in the catalytic mechanism.

Belongs to the LpxC family. Zn(2+) is required as a cofactor.

The enzyme catalyses a UDP-3-O-[(3R)-3-hydroxyacyl]-N-acetyl-alpha-D-glucosamine + H2O = a UDP-3-O-[(3R)-3-hydroxyacyl]-alpha-D-glucosamine + acetate. It participates in glycolipid biosynthesis; lipid IV(A) biosynthesis; lipid IV(A) from (3R)-3-hydroxytetradecanoyl-[acyl-carrier-protein] and UDP-N-acetyl-alpha-D-glucosamine: step 2/6. In terms of biological role, catalyzes the hydrolysis of UDP-3-O-myristoyl-N-acetylglucosamine to form UDP-3-O-myristoylglucosamine and acetate, the committed step in lipid A biosynthesis. This is UDP-3-O-acyl-N-acetylglucosamine deacetylase from Methylococcus capsulatus (strain ATCC 33009 / NCIMB 11132 / Bath).